Reading from the N-terminus, the 392-residue chain is Speckle-type POZ protein-like (392 aa).

One can recognise an MATH domain in the interval K31–V161. In terms of domain architecture, BTB spans T200–D267.

Belongs to the Tdpoz family. Homodimer. Heterodimer with SPOP. Component of cullin-RING-based BCR (BTB-CUL3-RBX1) E3 ubiquitin-protein ligase complexes containing homodimeric SPOPL or the heterodimer formed by SPOP and SPOPL.

Its subcellular location is the nucleus. Its pathway is protein modification; protein ubiquitination. In terms of biological role, component of a cullin-RING-based BCR (BTB-CUL3-RBX1) E3 ubiquitin-protein ligase complex that mediates the ubiquitination and subsequent proteasomal degradation of target proteins, but with relatively low efficiency. This Xenopus laevis (African clawed frog) protein is Speckle-type POZ protein-like (spopl).